Reading from the N-terminus, the 206-residue chain is MAIFLIDLPPSDMERRLGDALTVYVDAMRYPRGTETLRAPMWLEHIRRRGWQAVAAVEVTAAEQAEAADTTALPSAAELSNAPMLGVAYGYPGAPGQWWQQQVVLGLQRSGFPRLAIARLMTSYFELTELHILPRAQGRGLGEALARRLLAGRDEDNVLLSTPETNGEDNRAWRLYRRLGFTDIIRGYHFAGDPRAFAILGRTLPL.

The region spanning 44-205 (EHIRRRGWQA…AFAILGRTLP (162 aa)) is the N-acetyltransferase domain. Y176 functions as the Proton donor in the catalytic mechanism.

Belongs to the acetyltransferase family.

It catalyses the reaction L-lysyl-[protein] + acetyl-CoA = N(6)-acetyl-L-lysyl-[protein] + CoA + H(+). It carries out the reaction propanoyl-CoA + L-lysyl-[protein] = N(6)-propanoyl-L-lysyl-[protein] + CoA + H(+). The catalysed reaction is succinyl-CoA + L-lysyl-[protein] = N(6)-succinyl-L-lysyl-[protein] + CoA + H(+). Acetyltransferase involved in the post-translational regulation of the central metabolic enzyme isocitrate dehydrogenase 1 (ICDH-1) through lysine acetylation. Catalyzes the acetylation of ICDH-1 at Lys-30 and Lys-129, using acetyl-CoA as a donor, leading to a reduction of ICDH-1 enzyme activity. Can also use propionyl-CoA and succinyl-CoA as donors. Cannot act on the isocitrate dehydrogenase 2 (ICDH-2). Might play a role in regulating the TCA cycle and methylcitrate cycle when M.tuberculosis utilizes fatty acid as carbon source. In terms of biological role, in addition, it can acetylate the amino group of isoniazid (INH), one of the first-line drugs used for the treatment of tuberculosis, thereby canceling out the drug toxicity. Acts by catalyzing the transfer of an acetyl group from acetyl-CoA to INH. Following acetylation, INH is broken down into isonicotinic acid and acetylhydrazine. M.smegmatis and M.tuberculosis H37Ra strains overexpressing Rv2170 are resistant to INH. Has little or no acetyltransferase activity with other antibiotics such as streptomycin, neomycin, kanamycin, amikacin, apramycin and gentamicin. This Mycobacterium tuberculosis (strain ATCC 25618 / H37Rv) protein is GCN5-like protein acetyltransferase Rv2170.